The sequence spans 456 residues: Two pore potassium channel c (456 aa).

Residues 1–19 are compositionally biased toward low complexity; that stretch reads MDTEPLLSPLSPSPHLLHP. Residues 1–112 are disordered; that stretch reads MDTEPLLSPL…PPSLFDFIGG (112 aa). Residues 1–152 are Cytoplasmic-facing; that stretch reads MDTEPLLSPL…RNPPPPPRRP (152 aa). Positions 52–67 are enriched in pro residues; it reads HPPPPPPPPPPPPPPP. The chain crosses the membrane as a helical span at residues 153–173; that stretch reads AIVLHAFLFLLAYLAMGVTFY. The segment at residues 192–211 is an intramembrane region (pore-forming); it reads DALYFCIVTLCTIGYGDITP. Residues 223–243 traverse the membrane as a helical segment; sequence FVLIGFGFVDILLSGMVSYVL. The Cytoplasmic portion of the chain corresponds to 244–279; sequence DLQEHLLITALKNPRSVRKHRHNYIFDLKKGRMRVR. A helical transmembrane segment spans residues 280–300; it reads MKVALALTVVAICVGVGAAVL. Positions 310-329 form an intramembrane region, pore-forming; it reads DAVYLAVMSVTTVGYGDHAF. Residues 336–356 traverse the membrane as a helical segment; it reads LFASAWLLVSTLAVARAFLYL. Over 357–456 the chain is Cytoplasmic; that stretch reads AEMRIDKRHR…LNEKKKGKKS (100 aa). 2 EF-hand domains span residues 373 to 408 and 412 to 447; these read LSRD…EMGK and KDIM…VTDL. 8 residues coordinate Ca(2+): D386, D388, N390, Y392, E397, D425, K431, and D436.

Belongs to the two pore domain potassium channel (TC 1.A.1.7) family. Homodimer.

The protein localises to the membrane. Functionally, inward-rectifying potassium channel. This Oryza sativa subsp. japonica (Rice) protein is Two pore potassium channel c (TPKC).